A 338-amino-acid chain; its full sequence is MYG1 protein YER156C (338 aa).

It belongs to the MYG1 family.

The protein is MYG1 protein YER156C of Saccharomyces cerevisiae (strain ATCC 204508 / S288c) (Baker's yeast).